The following is a 1271-amino-acid chain: Clustered mitochondria protein homolog (1271 aa).

TPR repeat units lie at residues arginine 104 to glutamate 138 and cysteine 502 to lysine 535. In terms of domain architecture, Clu spans aspartate 329–isoleucine 580. Over residues glutamine 729–glutamate 763 the composition is skewed to basic and acidic residues. Residues glutamine 729–phenylalanine 783 are disordered. 3 TPR repeats span residues isoleucine 1067–valine 1100, valine 1109–isoleucine 1142, and alanine 1151–histidine 1184. A disordered region spans residues glutamine 1212 to lysine 1271. Over residues lysine 1241–asparagine 1253 the composition is skewed to polar residues. Low complexity predominate over residues serine 1254–arginine 1263.

This sequence belongs to the CLU family. As to quaternary structure, may associate with the eukaryotic translation initiation factor 3 (eIF-3) complex.

It localises to the cytoplasm. Its function is as follows. mRNA-binding protein involved in proper cytoplasmic distribution of mitochondria. This is Clustered mitochondria protein homolog from Meyerozyma guilliermondii (strain ATCC 6260 / CBS 566 / DSM 6381 / JCM 1539 / NBRC 10279 / NRRL Y-324) (Yeast).